A 142-amino-acid chain; its full sequence is Small ribosomal subunit protein uS12 (142 aa).

Belongs to the universal ribosomal protein uS12 family. Part of the 30S ribosomal subunit.

Functionally, with S4 and S5 plays an important role in translational accuracy. Located at the interface of the 30S and 50S subunits. The chain is Small ribosomal subunit protein uS12 from Methanospirillum hungatei JF-1 (strain ATCC 27890 / DSM 864 / NBRC 100397 / JF-1).